The sequence spans 56 residues: Large ribosomal subunit protein bL33 (56 aa).

The protein belongs to the bacterial ribosomal protein bL33 family.

The polypeptide is Large ribosomal subunit protein bL33 (rpmG) (Treponema pallidum (strain Nichols)).